Here is a 307-residue protein sequence, read N- to C-terminus: UDP-N-acetylenolpyruvoylglucosamine reductase (307 aa).

The region spanning 29–197 (RVGGPAEWFA…LSARFRLDPG (169 aa)) is the FAD-binding PCMH-type domain. Residue Arg-176 is part of the active site. Ser-227 functions as the Proton donor in the catalytic mechanism. The active site involves Glu-297.

Belongs to the MurB family. It depends on FAD as a cofactor.

It localises to the cytoplasm. It carries out the reaction UDP-N-acetyl-alpha-D-muramate + NADP(+) = UDP-N-acetyl-3-O-(1-carboxyvinyl)-alpha-D-glucosamine + NADPH + H(+). Its pathway is cell wall biogenesis; peptidoglycan biosynthesis. In terms of biological role, cell wall formation. The sequence is that of UDP-N-acetylenolpyruvoylglucosamine reductase from Prochlorococcus marinus (strain MIT 9313).